The chain runs to 309 residues: Ribonuclease Z (309 aa).

H63, H65, D67, H68, H145, D216, and H274 together coordinate Zn(2+). D67 acts as the Proton acceptor in catalysis.

The protein belongs to the RNase Z family. Homodimer. Requires Zn(2+) as cofactor.

It carries out the reaction Endonucleolytic cleavage of RNA, removing extra 3' nucleotides from tRNA precursor, generating 3' termini of tRNAs. A 3'-hydroxy group is left at the tRNA terminus and a 5'-phosphoryl group is left at the trailer molecule.. Its function is as follows. Zinc phosphodiesterase, which displays some tRNA 3'-processing endonuclease activity. Probably involved in tRNA maturation, by removing a 3'-trailer from precursor tRNA. In Streptococcus suis (strain 98HAH33), this protein is Ribonuclease Z.